A 269-amino-acid polypeptide reads, in one-letter code: Regulatory protein RecX (269 aa).

This sequence belongs to the RecX family.

It localises to the cytoplasm. Its function is as follows. Modulates RecA activity. The sequence is that of Regulatory protein RecX from Listeria monocytogenes serotype 4b (strain F2365).